Here is a 264-residue protein sequence, read N- to C-terminus: ATP synthase subunit a (264 aa).

6 helical membrane passes run 29–49 (TWHI…LWLF), 89–109 (VIAP…FMDM), 134–154 (DLNI…YYSI), 177–197 (IPVN…SLAL), 208–228 (LIFI…ALGV), and 235–255 (LIFH…LTIV).

It belongs to the ATPase A chain family. As to quaternary structure, F-type ATPases have 2 components, CF(1) - the catalytic core - and CF(0) - the membrane proton channel. CF(1) has five subunits: alpha(3), beta(3), gamma(1), delta(1), epsilon(1). CF(0) has three main subunits: a(1), b(2) and c(9-12). The alpha and beta chains form an alternating ring which encloses part of the gamma chain. CF(1) is attached to CF(0) by a central stalk formed by the gamma and epsilon chains, while a peripheral stalk is formed by the delta and b chains.

Its subcellular location is the cell inner membrane. Its function is as follows. Key component of the proton channel; it plays a direct role in the translocation of protons across the membrane. The polypeptide is ATP synthase subunit a (Shewanella sediminis (strain HAW-EB3)).